Consider the following 172-residue polypeptide: Translation initiation factor IF-3 (172 aa).

This sequence belongs to the IF-3 family. In terms of assembly, monomer.

It is found in the cytoplasm. IF-3 binds to the 30S ribosomal subunit and shifts the equilibrium between 70S ribosomes and their 50S and 30S subunits in favor of the free subunits, thus enhancing the availability of 30S subunits on which protein synthesis initiation begins. The polypeptide is Translation initiation factor IF-3 (Geobacter sulfurreducens (strain ATCC 51573 / DSM 12127 / PCA)).